A 370-amino-acid polypeptide reads, in one-letter code: Nematocyst expressed protein 4 (370 aa).

The signal sequence occupies residues 1–19 (MAWTLVLLVLLGTSSCLDA). Residues 34–55 (SGSGSGEEGSSGSGSAPEPVRD) are disordered. Residues 36 to 45 (SGSGEEGSSG) are compositionally biased toward gly residues. ShKT domains follow at residues 70 to 102 (CLDK…CRFC), 113 to 149 (CTDA…CKLC), and 155 to 190 (GKKF…CEVH). 8 disulfide bridges follow: cysteine 70-cysteine 102, cysteine 77-cysteine 95, cysteine 84-cysteine 99, cysteine 113-cysteine 149, cysteine 121-cysteine 142, cysteine 131-cysteine 146, cysteine 164-cysteine 183, and cysteine 173-cysteine 187. Pro residues predominate over residues 306-340 (PYPPPPPPYPEQVPPPPPPPPPPPPPPPYPYPYPY). Positions 306–370 (PYPPPPPPYP…HHKENHSKKS (65 aa)) are disordered. The segment covering 349–370 (HKSKKHAKHHEKHHKENHSKKS) has biased composition (basic residues).

This sequence belongs to the NEP3 family. In terms of tissue distribution, nematocytes. In late planulae, transcripts are found throughout the ectoderm in nematocytes, with high concentration of expressing cells in the oral pole. In primary polyps, is expressed in nematocytes in the body wall and physa ectoderm and in the upper and lower pharynx.

It localises to the nematocyst. The protein resides in the secreted. The polypeptide is Nematocyst expressed protein 4 (Nematostella vectensis (Starlet sea anemone)).